The chain runs to 444 residues: Spermatogenesis-associated protein 1 (444 aa).

Residues 268 to 403 (SLLKIEREKI…RKLDTDKMKL (136 aa)) adopt a coiled-coil conformation.

As to quaternary structure, interacts with IFT20. As to expression, highly abundant in the testis, and is also expressed in the heart and kidney (at protein level).

It localises to the cytoplasmic vesicle. The protein localises to the secretory vesicle. The protein resides in the acrosome. This chain is Spermatogenesis-associated protein 1 (Spata1), found in Mus musculus (Mouse).